A 394-amino-acid chain; its full sequence is NAD(P)H-quinone oxidoreductase subunit H (394 aa).

This sequence belongs to the complex I 49 kDa subunit family. In terms of assembly, NDH-1 can be composed of about 15 different subunits; different subcomplexes with different compositions have been identified which probably have different functions.

Its subcellular location is the cellular thylakoid membrane. It catalyses the reaction a plastoquinone + NADH + (n+1) H(+)(in) = a plastoquinol + NAD(+) + n H(+)(out). The catalysed reaction is a plastoquinone + NADPH + (n+1) H(+)(in) = a plastoquinol + NADP(+) + n H(+)(out). Its function is as follows. NDH-1 shuttles electrons from an unknown electron donor, via FMN and iron-sulfur (Fe-S) centers, to quinones in the respiratory and/or the photosynthetic chain. The immediate electron acceptor for the enzyme in this species is believed to be plastoquinone. Couples the redox reaction to proton translocation, and thus conserves the redox energy in a proton gradient. Cyanobacterial NDH-1 also plays a role in inorganic carbon-concentration. The sequence is that of NAD(P)H-quinone oxidoreductase subunit H from Synechococcus sp. (strain RCC307).